A 248-amino-acid polypeptide reads, in one-letter code: UDP-2,3-diacylglucosamine hydrolase (248 aa).

Residues D8, H10, D41, N79, and H114 each coordinate Mn(2+). 79–80 (NR) contacts substrate. Substrate is bound by residues D122, N164, R167, and H195. H195 and H197 together coordinate Mn(2+).

The protein belongs to the LpxH family. The cofactor is Mn(2+).

It is found in the cell inner membrane. It catalyses the reaction UDP-2-N,3-O-bis[(3R)-3-hydroxytetradecanoyl]-alpha-D-glucosamine + H2O = 2-N,3-O-bis[(3R)-3-hydroxytetradecanoyl]-alpha-D-glucosaminyl 1-phosphate + UMP + 2 H(+). It functions in the pathway glycolipid biosynthesis; lipid IV(A) biosynthesis; lipid IV(A) from (3R)-3-hydroxytetradecanoyl-[acyl-carrier-protein] and UDP-N-acetyl-alpha-D-glucosamine: step 4/6. Functionally, hydrolyzes the pyrophosphate bond of UDP-2,3-diacylglucosamine to yield 2,3-diacylglucosamine 1-phosphate (lipid X) and UMP by catalyzing the attack of water at the alpha-P atom. Involved in the biosynthesis of lipid A, a phosphorylated glycolipid that anchors the lipopolysaccharide to the outer membrane of the cell. This chain is UDP-2,3-diacylglucosamine hydrolase, found in Wigglesworthia glossinidia brevipalpis.